The following is a 92-amino-acid chain: RNA-binding protein Hfq (92 aa).

The region spanning 9–68 is the Sm domain; it reads DPFLNALRRERVPVSIYLVNGIKLQGQVESFDQFVILLKNTVSQMVYKHAISTVVPARPF. Residues 68 to 92 form a disordered region; sequence FNVSSHHNTPNQAAGYNASHDDSAE. Polar residues predominate over residues 69 to 81; it reads NVSSHHNTPNQAA.

This sequence belongs to the Hfq family. As to quaternary structure, homohexamer.

In terms of biological role, RNA chaperone that binds small regulatory RNA (sRNAs) and mRNAs to facilitate mRNA translational regulation in response to envelope stress, environmental stress and changes in metabolite concentrations. Also binds with high specificity to tRNAs. The sequence is that of RNA-binding protein Hfq from Shewanella loihica (strain ATCC BAA-1088 / PV-4).